The sequence spans 348 residues: Thioesterase-like protein TwmA (348 aa).

It functions in the pathway secondary metabolite biosynthesis. Functionally, thioesterase-like protein; part of the gene cluster that mediates the biosynthesis of wortmanamides A and B, reduced long-chain polyketides amidated with a specific omega-amino acid, 5-aminopentanoic acid (5PA). The PKS modules of TwmB are involved in the synthesis of the polyketide backbone, whereas the non-canonical C domain of TwmB is a bonafide condensation domain that specifically selects 5PA and catalyzes amidation to release polyketide chain. The C domain clearly prefers C16 and C18 fatty acyl substrates, which is consistent with simultaneous formation of both octaketide and nonaketide acyl amides wortmanamides A and B. Because TwmB lacks a designated enoylreductase (ER) domain, the required activity is provided the enoyl reductase TwmE. The roles of the remaining enzymes have still to be clarified. The protein is Thioesterase-like protein TwmA of Talaromyces wortmannii (Penicillium wortmannii).